The chain runs to 362 residues: Chorismate synthase (362 aa).

Arg-47 contacts NADP(+). FMN-binding positions include 124-126 (RSS), Gly-286, 301-305 (KPTAT), and Arg-327.

The protein belongs to the chorismate synthase family. In terms of assembly, homotetramer. It depends on FMNH2 as a cofactor.

The catalysed reaction is 5-O-(1-carboxyvinyl)-3-phosphoshikimate = chorismate + phosphate. It functions in the pathway metabolic intermediate biosynthesis; chorismate biosynthesis; chorismate from D-erythrose 4-phosphate and phosphoenolpyruvate: step 7/7. Catalyzes the anti-1,4-elimination of the C-3 phosphate and the C-6 proR hydrogen from 5-enolpyruvylshikimate-3-phosphate (EPSP) to yield chorismate, which is the branch point compound that serves as the starting substrate for the three terminal pathways of aromatic amino acid biosynthesis. This reaction introduces a second double bond into the aromatic ring system. The chain is Chorismate synthase from Gloeothece citriformis (strain PCC 7424) (Cyanothece sp. (strain PCC 7424)).